We begin with the raw amino-acid sequence, 317 residues long: Beta-ketoacyl-[acyl-carrier-protein] synthase III (317 aa).

Residues cysteine 112 and histidine 244 contribute to the active site. The interval 245–249 (QANVR) is ACP-binding. Asparagine 274 is a catalytic residue.

The protein belongs to the thiolase-like superfamily. FabH family. As to quaternary structure, homodimer.

It localises to the cytoplasm. It catalyses the reaction malonyl-[ACP] + acetyl-CoA + H(+) = 3-oxobutanoyl-[ACP] + CO2 + CoA. It participates in lipid metabolism; fatty acid biosynthesis. Functionally, catalyzes the condensation reaction of fatty acid synthesis by the addition to an acyl acceptor of two carbons from malonyl-ACP. Catalyzes the first condensation reaction which initiates fatty acid synthesis and may therefore play a role in governing the total rate of fatty acid production. Possesses both acetoacetyl-ACP synthase and acetyl transacylase activities. Its substrate specificity determines the biosynthesis of branched-chain and/or straight-chain of fatty acids. This Rickettsia bellii (strain OSU 85-389) protein is Beta-ketoacyl-[acyl-carrier-protein] synthase III.